We begin with the raw amino-acid sequence, 523 residues long: Cytokinin dehydrogenase 3 (523 aa).

Positions 1-31 (MASYNLRSQVRLIAITIVIIITLSTPITTNT) are cleaved as a signal peptide. The region spanning 66–243 (TKIFPSAVLI…TRARIKLEVA (178 aa)) is the FAD-binding PCMH-type domain. Positions 100, 102, and 104 each coordinate FAD. At His-105 the chain carries Pros-8alpha-FAD histidine. Residues Ser-106 and Gln-110 each coordinate FAD. Asn-153 carries an N-linked (GlcNAc...) asparagine glycan. FAD-binding residues include Asp-167, Thr-172, Ser-178, Ile-182, and Ile-233. Residue Asn-408 is glycosylated (N-linked (GlcNAc...) asparagine). Residues Tyr-476, Ser-511, and Gln-514 each coordinate FAD.

It belongs to the oxygen-dependent FAD-linked oxidoreductase family. It depends on FAD as a cofactor. As to expression, very weak expression in the young shoot tissues around two weeks after germination. Present in the center of the floral meristem and the boundary between long stamen primordia and gynoecial primordia.

It is found in the endoplasmic reticulum. The protein resides in the vacuole. It carries out the reaction N(6)-dimethylallyladenine + A + H2O = 3-methyl-2-butenal + adenine + AH2. Catalyzes the oxidation of cytokinins, a family of N(6)-substituted adenine derivatives that are plant hormones, where the substituent is an isopentenyl group. Catalyzes in vitro the oxidation of various types of cytokinin nucleotides that are known as direct products of cytokinin biosynthesis. In association with CKX5 regulates the activity of the reproductive meristems, flower organ size and ovule formation. This is Cytokinin dehydrogenase 3 (CKX3) from Arabidopsis thaliana (Mouse-ear cress).